The following is a 178-amino-acid chain: Ribosome maturation factor RimM (178 aa).

The region spanning 101–178 (ADEYYWYQLE…VMRVEWDADF (78 aa)) is the PRC barrel domain.

Belongs to the RimM family. As to quaternary structure, binds ribosomal protein uS19.

The protein resides in the cytoplasm. Functionally, an accessory protein needed during the final step in the assembly of 30S ribosomal subunit, possibly for assembly of the head region. Essential for efficient processing of 16S rRNA. May be needed both before and after RbfA during the maturation of 16S rRNA. It has affinity for free ribosomal 30S subunits but not for 70S ribosomes. In Pseudomonas fluorescens (strain Pf0-1), this protein is Ribosome maturation factor RimM.